The chain runs to 1383 residues: DNA-directed RNA polymerase subunit beta (1383 aa).

It belongs to the RNA polymerase beta chain family. The RNAP catalytic core consists of 2 alpha, 1 beta, 1 beta' and 1 omega subunit. When a sigma factor is associated with the core the holoenzyme is formed, which can initiate transcription.

It catalyses the reaction RNA(n) + a ribonucleoside 5'-triphosphate = RNA(n+1) + diphosphate. Its function is as follows. DNA-dependent RNA polymerase catalyzes the transcription of DNA into RNA using the four ribonucleoside triphosphates as substrates. The protein is DNA-directed RNA polymerase subunit beta of Xanthomonas euvesicatoria pv. vesicatoria (strain 85-10) (Xanthomonas campestris pv. vesicatoria).